The sequence spans 311 residues: tRNA-cytidine(32) 2-sulfurtransferase (311 aa).

Positions 47–52 (SGGKDS) match the PP-loop motif motif. The [4Fe-4S] cluster site is built by Cys122, Cys125, and Cys213.

The protein belongs to the TtcA family. Homodimer. Requires Mg(2+) as cofactor. It depends on [4Fe-4S] cluster as a cofactor.

It is found in the cytoplasm. It carries out the reaction cytidine(32) in tRNA + S-sulfanyl-L-cysteinyl-[cysteine desulfurase] + AH2 + ATP = 2-thiocytidine(32) in tRNA + L-cysteinyl-[cysteine desulfurase] + A + AMP + diphosphate + H(+). The protein operates within tRNA modification. Catalyzes the ATP-dependent 2-thiolation of cytidine in position 32 of tRNA, to form 2-thiocytidine (s(2)C32). The sulfur atoms are provided by the cysteine/cysteine desulfurase (IscS) system. The protein is tRNA-cytidine(32) 2-sulfurtransferase of Pectobacterium atrosepticum (strain SCRI 1043 / ATCC BAA-672) (Erwinia carotovora subsp. atroseptica).